The following is a 259-amino-acid chain: Protein-L-isoaspartate O-methyltransferase (259 aa).

Residues 1-25 form a disordered region; sequence MRKRVDPPAGGRLAPGITPANSNTR. Serine 107 is a catalytic residue.

This sequence belongs to the methyltransferase superfamily. L-isoaspartyl/D-aspartyl protein methyltransferase family.

It localises to the cytoplasm. It carries out the reaction [protein]-L-isoaspartate + S-adenosyl-L-methionine = [protein]-L-isoaspartate alpha-methyl ester + S-adenosyl-L-homocysteine. Functionally, catalyzes the methyl esterification of L-isoaspartyl residues in peptides and proteins that result from spontaneous decomposition of normal L-aspartyl and L-asparaginyl residues. It plays a role in the repair and/or degradation of damaged proteins. The chain is Protein-L-isoaspartate O-methyltransferase from Bordetella bronchiseptica (strain ATCC BAA-588 / NCTC 13252 / RB50) (Alcaligenes bronchisepticus).